The primary structure comprises 70 residues: Small ribosomal subunit protein bS21 (70 aa).

The protein belongs to the bacterial ribosomal protein bS21 family.

The polypeptide is Small ribosomal subunit protein bS21 (Nitrosomonas eutropha (strain DSM 101675 / C91 / Nm57)).